We begin with the raw amino-acid sequence, 364 residues long: Palmitoyltransferase ZDHHC9 (364 aa).

Residues M1–K35 are Cytoplasmic-facing. A helical membrane pass occupies residues G36–E56. Residues C57–Q63 lie on the Lumenal side of the membrane. A helical membrane pass occupies residues Q64–L84. Topologically, residues R85 to Y183 are cytoplasmic. Residues K139–L189 form the DHHC domain. C169 functions as the S-palmitoyl cysteine intermediate in the catalytic mechanism. The chain crosses the membrane as a helical span at residues F184–V204. Topologically, residues Y205–E228 are lumenal. A helical membrane pass occupies residues V229–L249. Residues V250–K364 are Cytoplasmic-facing. Residues P303–K364 are disordered. Residues R310–P323 show a composition bias toward polar residues. The segment covering E346–P356 has biased composition (pro residues).

It belongs to the DHHC palmitoyltransferase family. ERF2/ZDHHC9 subfamily. Interacts with GOLGA7.

It localises to the endoplasmic reticulum membrane. The protein localises to the golgi apparatus membrane. It catalyses the reaction L-cysteinyl-[protein] + hexadecanoyl-CoA = S-hexadecanoyl-L-cysteinyl-[protein] + CoA. Palmitoyltransferase that catalyzes the addition of palmitate onto various protein substrates, such as ADRB2, GSDMD, HRAS, NRAS and CGAS. The ZDHHC9-GOLGA7 complex is a palmitoyltransferase specific for HRAS and NRAS. May have a palmitoyltransferase activity toward the beta-2 adrenergic receptor/ADRB2 and therefore regulate G protein-coupled receptor signaling. Acts as a regulator of innate immunity by catalyzing palmitoylation of CGAS, thereby promoting CGAS homodimerization and cyclic GMP-AMP synthase activity. Activates pyroptosis by catalyzing palmitoylation of gasdermin-D (GSDMD), thereby promoting membrane translocation and pore formation of GSDMD. The sequence is that of Palmitoyltransferase ZDHHC9 (ZDHHC9) from Pongo abelii (Sumatran orangutan).